The chain runs to 503 residues: AMP phosphorylase (503 aa).

AMP-binding positions include glycine 168, 194–199 (SRAITG), and serine 203. Residue aspartate 256 is the Proton donor of the active site. Residues serine 264 and lysine 288 each coordinate AMP.

This sequence belongs to the thymidine/pyrimidine-nucleoside phosphorylase family. Type 2 subfamily.

It catalyses the reaction AMP + phosphate = alpha-D-ribose 1,5-bisphosphate + adenine. It carries out the reaction CMP + phosphate = cytosine + alpha-D-ribose 1,5-bisphosphate. The enzyme catalyses UMP + phosphate = alpha-D-ribose 1,5-bisphosphate + uracil. Functionally, catalyzes the conversion of AMP and phosphate to adenine and ribose 1,5-bisphosphate (R15P). Exhibits phosphorylase activity toward CMP and UMP in addition to AMP. Functions in an archaeal AMP degradation pathway, together with R15P isomerase and RubisCO. This is AMP phosphorylase from Methanocella arvoryzae (strain DSM 22066 / NBRC 105507 / MRE50).